A 405-amino-acid chain; its full sequence is Acetate kinase (405 aa).

Residue Asn7 participates in Mg(2+) binding. Lys14 is a binding site for ATP. Arg92 is a binding site for substrate. The active-site Proton donor/acceptor is the Asp149. Residues 209 to 213 and 284 to 286 contribute to the ATP site; these read HLGNG and DMR. A Mg(2+)-binding site is contributed by Glu389.

It belongs to the acetokinase family. In terms of assembly, homodimer. Mg(2+) serves as cofactor. Mn(2+) is required as a cofactor.

It localises to the cytoplasm. The enzyme catalyses acetate + ATP = acetyl phosphate + ADP. Its pathway is metabolic intermediate biosynthesis; acetyl-CoA biosynthesis; acetyl-CoA from acetate: step 1/2. In terms of biological role, catalyzes the formation of acetyl phosphate from acetate and ATP. Can also catalyze the reverse reaction. The sequence is that of Acetate kinase from Borreliella burgdorferi (strain ZS7) (Borrelia burgdorferi).